We begin with the raw amino-acid sequence, 227 residues long: Ribose-5-phosphate isomerase A (227 aa).

Substrate contacts are provided by residues 26 to 29 (TGST), 82 to 85 (DGAD), and 95 to 98 (KGGG). Glu104 functions as the Proton acceptor in the catalytic mechanism. Position 122 (Lys122) interacts with substrate.

This sequence belongs to the ribose 5-phosphate isomerase family. As to quaternary structure, homodimer.

The catalysed reaction is aldehydo-D-ribose 5-phosphate = D-ribulose 5-phosphate. It participates in carbohydrate degradation; pentose phosphate pathway; D-ribose 5-phosphate from D-ribulose 5-phosphate (non-oxidative stage): step 1/1. Catalyzes the reversible conversion of ribose-5-phosphate to ribulose 5-phosphate. This Streptococcus pyogenes serotype M2 (strain MGAS10270) protein is Ribose-5-phosphate isomerase A.